The chain runs to 308 residues: Glutaminase (308 aa).

Serine 66, asparagine 117, glutamate 161, asparagine 168, tyrosine 192, tyrosine 244, and valine 262 together coordinate substrate.

The protein belongs to the glutaminase family. In terms of assembly, homotetramer.

It carries out the reaction L-glutamine + H2O = L-glutamate + NH4(+). This is Glutaminase from Proteus mirabilis (strain HI4320).